The chain runs to 449 residues: Gallate transporter (449 aa).

12 helical membrane passes run 26-46, 62-82, 92-112, 123-143, 155-175, 183-203, 262-282, 298-318, 326-346, 349-369, 388-408, and 414-434; these read WLIL…VAVM, AAFG…ALTA, KKVL…CAFA, LLTG…LAEY, IMFT…AWLI, VLLA…WLLP, LALW…MGWL, TITG…GWIM, VIAI…ALSL, SLLV…QTAL, WMLG…GAVL, and LPLL…AILA.

The protein belongs to the major facilitator superfamily. Sugar transporter (TC 2.A.1.1) family.

The protein resides in the membrane. In terms of biological role, transporter that specifically mediates the uptake of gallate. In Pseudomonas putida (Arthrobacter siderocapsulatus), this protein is Gallate transporter (galT).